Consider the following 512-residue polypeptide: Gasdermin-E (512 aa).

The interval 1–56 (MFAKATRNFLKEVDAGGDLISVSHLNDSDKLQLLSLVTKKKRYWCWQRPKYQILSA) is membrane targeting domain. At C45 the chain carries S-(2-succinyl)cysteine. K120 is covalently cross-linked (Glycyl lysine isopeptide (Lys-Gly) (interchain with G-Cter in ubiquitin)). An S-(2-succinyl)cysteine mark is found at C156, C168, and C180. K189 participates in a covalent cross-link: Glycyl lysine isopeptide (Lys-Gly) (interchain with G-Cter in ubiquitin). C235, C411, and C420 each carry S-(2-succinyl)cysteine.

It belongs to the gasdermin family. In terms of assembly, homooligomer; homooligomeric ring-shaped pore complex containing 27-28 subunits when inserted in the membrane. Post-translationally, cleavage at Asp-270 by CASP3 (mature and uncleaved precursor forms) or granzyme B (GZMB) relieves autoinhibition and is sufficient to initiate pyroptosis. Succination by the Krebs cycle intermediate fumarate, which leads to S-(2-succinyl)cysteine residues, inhibits processing by caspases, and ability to initiate pyroptosis. Succination modification is catalyzed by a non-enzymatic reaction caused by an accumulation of fumarate. In terms of processing, ubiquitinated on Lys-120 and Lys-189 via 'Lys-48'-linked polyubiquitin chains, leading to proteasomal degradation. Deubiquitinated by USP48, leading to increased stability. Post-translationally, palmitoylated. As to expression, expressed in spleen, kidney, large and small intestine, testicle, stomach and by CD4(+)CD(8+) T cells in thymus. Expressed by macrophages.

It localises to the cell membrane. Its subcellular location is the cytoplasm. The protein localises to the cytosol. Its activity is regulated as follows. The full-length protein before cleavage is inactive: intramolecular interactions between N- and C-terminal domains mediate autoinhibition in the absence of activation signal. The intrinsic pyroptosis-inducing activity is carried by the released N-terminal moiety (Gasdermin-E, N-terminal) following cleavage by CASP3 or granzyme B (GZMB). Activated by NLRP1 in the absence of GSDMD expression: NLRP1 cleaves and activates CASP8, promoting downstream activation of CASP3 and subsequent activation of GSDME. Precursor of a pore-forming protein that converts non-inflammatory apoptosis to pyroptosis. This form constitutes the precursor of the pore-forming protein: upon cleavage, the released N-terminal moiety (Gasdermin-E, N-terminal) binds to membranes and forms pores, triggering pyroptosis. Functionally, pore-forming protein produced by cleavage by CASP3 or granzyme B (GZMB), which converts non-inflammatory apoptosis to pyroptosis or promotes granzyme-mediated pyroptosis, respectively. After cleavage, moves to the plasma membrane, homooligomerizes within the membrane and forms pores of 10-15 nanometers (nm) of inner diameter, allowing the release of mature interleukins (IL1B and IL16) and triggering pyroptosis. Binds to inner leaflet lipids, bisphosphorylated phosphatidylinositols, such as phosphatidylinositol (4,5)-bisphosphate. Cleavage by CASP3 switches CASP3-mediated apoptosis induced by TNF or danger signals, such as chemotherapy drugs, to pyroptosis. Mediates secondary necrosis downstream of the mitochondrial apoptotic pathway and CASP3 activation as well as in response to viral agents. Exhibits bactericidal activity. Cleavage by GZMB promotes tumor suppressor activity by triggering robust anti-tumor immunity. Suppresses tumors by mediating granzyme-mediated pyroptosis in target cells of natural killer (NK) cells: cleavage by granzyme B (GZMB), delivered to target cells from NK-cells, triggers pyroptosis of tumor cells and tumor suppression. May play a role in the p53/TP53-regulated cellular response to DNA damage. This is Gasdermin-E from Mus musculus (Mouse).